Consider the following 521-residue polypeptide: Caspase-10 (521 aa).

The propeptide occupies 1–219 (MKSQGQHWYS…GEEELVSQTD (219 aa)). DED domains are found at residues 19–97 (SFRE…HLNC) and 114–187 (LFRN…NIEK). 2 stretches are compositionally biased toward polar residues: residues 231-248 (SWQNKHAGSNGNRATNGA) and 259-268 (ASANTLNSET). The segment at 231-269 (SWQNKHAGSNGNRATNGAPSLVSRGMQGASANTLNSETS) is disordered. Active-site residues include His358 and Cys401.

The protein belongs to the peptidase C14A family. As to quaternary structure, heterotetramer that consists of two anti-parallel arranged heterodimers, each one formed by a 23/17 kDa (p23/17) (depending on the splicing events) and a 12 kDa (p12) subunit. Self-associates. Interacts with FADD and CASP8. Found in a Fas signaling complex consisting of FAS, FADD, CASP8 and CASP10. Interacts with RFFL and RNF34; negatively regulate CASP10 through proteasomal degradation. Interacts with RIOK3. Post-translationally, cleavage by granzyme B and autocatalytic activity generate the two active subunits. Detectable in most tissues. Lowest expression is seen in brain, kidney, prostate, testis and colon.

It catalyses the reaction Strict requirement for Asp at position P1 and has a preferred cleavage sequence of Leu-Gln-Thr-Asp-|-Gly.. Functionally, involved in the activation cascade of caspases responsible for apoptosis execution. Recruited to both Fas- and TNFR-1 receptors in a FADD dependent manner. May participate in the granzyme B apoptotic pathways. Cleaves and activates effector caspases CASP3, CASP4, CASP6, CASP7, CASP8 and CASP9. Hydrolyzes the small- molecule substrates, Tyr-Val-Ala-Asp-|-AMC and Asp-Glu-Val-Asp-|-AMC. Isoform 7 can enhance NF-kappaB activity but promotes only slight apoptosis. In terms of biological role, isoform C is proteolytically inactive. This Homo sapiens (Human) protein is Caspase-10 (CASP10).